The primary structure comprises 33 residues: Dolabellanin-B2 (33 aa).

Post-translationally, contains two disulfide bonds. In terms of processing, up to two of the methionines may be oxidized to methionine sulfoxides.

It localises to the secreted. In terms of biological role, has antibacterial activity against Gram-negative bacteria E.coli JM109 and DH5-alpha, H.influenza IID 983, and V.vulnificus RIMD 2219009. Has antibacterial activity against Gram-positive bacteria S.aureus IID 1677, B.subtilis RIMD 0225014 and L.monocytogenes VIU206. Possesses antifungal activity against S.cerevisiae A581A, S.pombe IFO 1628, C.albicans ATCC 36232 and TIMM-1623, and C.tropicalis TIMM-0313. In Dolabella auricularia (Shoulderblade sea cat), this protein is Dolabellanin-B2.